A 364-amino-acid chain; its full sequence is Succinyl-diaminopimelate desuccinylase (364 aa).

Histidine 66 is a binding site for Zn(2+). Aspartate 68 is a catalytic residue. Aspartate 97 is a binding site for Zn(2+). Glutamate 127 (proton acceptor) is an active-site residue. Positions 128, 156, and 341 each coordinate Zn(2+).

The protein belongs to the peptidase M20A family. DapE subfamily. As to quaternary structure, homodimer. It depends on Zn(2+) as a cofactor. Requires Co(2+) as cofactor.

It catalyses the reaction N-succinyl-(2S,6S)-2,6-diaminopimelate + H2O = (2S,6S)-2,6-diaminopimelate + succinate. It participates in amino-acid biosynthesis; L-lysine biosynthesis via DAP pathway; LL-2,6-diaminopimelate from (S)-tetrahydrodipicolinate (succinylase route): step 3/3. Catalyzes the hydrolysis of N-succinyl-L,L-diaminopimelic acid (SDAP), forming succinate and LL-2,6-diaminopimelate (DAP), an intermediate involved in the bacterial biosynthesis of lysine and meso-diaminopimelic acid, an essential component of bacterial cell walls. This chain is Succinyl-diaminopimelate desuccinylase, found in Wolinella succinogenes (strain ATCC 29543 / DSM 1740 / CCUG 13145 / JCM 31913 / LMG 7466 / NCTC 11488 / FDC 602W) (Vibrio succinogenes).